The following is a 179-amino-acid chain: Inner membrane-spanning protein YciB (179 aa).

Transmembrane regions (helical) follow at residues 3 to 23 (FLFDLFPVILFFVAFKLFGIY), 49 to 69 (PMQWVSLAIIAVFGGATILLH), 76 to 96 (WKPTVLYWLFAVTLIGSVIGW), 121 to 141 (VAWAGFFAVMGVLNLYVAYQF), and 149 to 169 (FKLFGSMGLMLVFIVAQSIWL).

Belongs to the YciB family.

It localises to the cell inner membrane. Plays a role in cell envelope biogenesis, maintenance of cell envelope integrity and membrane homeostasis. The protein is Inner membrane-spanning protein YciB of Cupriavidus metallidurans (strain ATCC 43123 / DSM 2839 / NBRC 102507 / CH34) (Ralstonia metallidurans).